The chain runs to 202 residues: MELWGPCVLLCLFSLLTQVTAETPTPKAKKAANAKKDAVSPKMLEELKTQLDSLAQEVALLKEQQALQTVCLKGTKVHMKCFLAFVQAKTFHEASEDCISRGGTLGTPQTGSENDALYEYLRQSVGSEAEVWLGFNDMASEGSWVDMTGGHIAYKNWETEITAQPDGGKVENCATLSGAANGKWFDKRCRDKLPYVCQFAIV.

An N-terminal signal peptide occupies residues 1-21 (MELWGPCVLLCLFSLLTQVTA). Intrachain disulfides connect C71–C81, C98–C197, and C173–C189. The C-type lectin domain occupies 77–198 (VHMKCFLAFV…CRDKLPYVCQ (122 aa)).

As to quaternary structure, homotrimer.

The protein localises to the secreted. In terms of biological role, tetranectin binds to plasminogen and to isolated kringle 4. May be involved in the packaging of molecules destined for exocytosis. Plays a role in retinal function. The polypeptide is Tetranectin (CLEC3B) (Bos taurus (Bovine)).